The following is a 437-amino-acid chain: Transmembrane protease serine 4 (437 aa).

Residues 1–32 (MLQDPDSDQPLNSLDVKPLRKPRIPMETFRKV) are Cytoplasmic-facing. The chain crosses the membrane as a helical; Signal-anchor for type II membrane protein span at residues 33–53 (GIPIIIALLSLASIIIVVVLI). The Extracellular portion of the chain corresponds to 54-437 (KVILDKYYFL…WIYNVWKAEL (384 aa)). The 33-residue stretch at 61–93 (YFLCGQPLHFIPRKQLCDGELDCPLGEDEEHCV) folds into the LDL-receptor class A domain. Intrachain disulfides connect Cys64-Cys83, Cys77-Cys92, Cys127-Cys183, Cys140-Cys193, Cys196-Cys310, Cys230-Cys246, Cys356-Cys372, and Cys383-Cys410. The SRCR domain maps to 94–204 (KSFPEGPAVA…ACGKSLKTPR (111 aa)). N-linked (GlcNAc...) asparagine glycans are attached at residues Asn130 and Asn178. The Peptidase S1 domain maps to 205-434 (VVGVEEASVD…YLNWIYNVWK (230 aa)). Residues His245 and Asp290 each act as charge relay system in the active site. The active-site Charge relay system is Ser387.

It belongs to the peptidase S1 family. In terms of processing, proteolytically processed; probably by an autocatalytic mechanism. High levels in pancreatic, gastric, colorectal and ampullary cancer. Very weak expression in normal gastrointestinal and urogenital tract. Coexpressed with ACE2 within mature enterocytes.

The protein resides in the cell membrane. The protein localises to the secreted. Functionally, plasma membrane-anchored serine protease that directly induces processing of pro-uPA/PLAU into the active form through proteolytic activity. Seems to be capable of activating ENaC. (Microbial infection) In gut epithelial cells, facilitates human coronavirus SARS-CoV-2 infection through, at least, the cleavage of coronavirus spike glycoproteins which activates the glycoprotein for host cell entry. The sequence is that of Transmembrane protease serine 4 from Homo sapiens (Human).